The sequence spans 337 residues: Transcription factor bHLH121 (337 aa).

The region spanning 58-108 is the bHLH domain; the sequence is ARKSQKAGREKLRREKLNEHFVELGNVLDPERPKNDKATILTDTVQLLKEL. The tract at residues 235-337 is disordered; the sequence is VHIPQNPGNR…AGGQKPDDAK (103 aa). Composition is skewed to basic and acidic residues over residues 244–263 and 280–291; these read RSRE…KAED and SDKDTLQRPEKT. Residues 297–317 show a composition bias toward low complexity; the sequence is NNNNNSIEESSHSSKCSSSPS.

As to quaternary structure, homodimer. Expressed constitutively in roots, leaves, stems, and flowers.

It is found in the nucleus. The chain is Transcription factor bHLH121 (BHLH121) from Arabidopsis thaliana (Mouse-ear cress).